The primary structure comprises 491 residues: Cobyric acid synthase (491 aa).

Residues 246 to 432 (RKLIACPILP…VHGLLADAEL (187 aa)) form the GATase cobBQ-type domain. Cysteine 328 serves as the catalytic Nucleophile. Histidine 424 is an active-site residue.

This sequence belongs to the CobB/CobQ family. CobQ subfamily.

Its pathway is cofactor biosynthesis; adenosylcobalamin biosynthesis. Functionally, catalyzes amidations at positions B, D, E, and G on adenosylcobyrinic A,C-diamide. NH(2) groups are provided by glutamine, and one molecule of ATP is hydrogenolyzed for each amidation. The sequence is that of Cobyric acid synthase from Novosphingobium aromaticivorans (strain ATCC 700278 / DSM 12444 / CCUG 56034 / CIP 105152 / NBRC 16084 / F199).